Here is a 393-residue protein sequence, read N- to C-terminus: S-adenosylmethionine synthase (393 aa).

Residue Glu-9 coordinates Mg(2+). His-15 provides a ligand contact to ATP. Glu-43 contacts K(+). Residues Glu-56 and Gln-99 each contribute to the L-methionine site. Residues 167–169, 235–238, Asp-246, 252–253, Ala-269, Lys-273, and Lys-277 contribute to the ATP site; these read DGK, SGRF, and RK. Asp-246 lines the L-methionine pocket. Lys-277 is a binding site for L-methionine.

Belongs to the AdoMet synthase family. In terms of assembly, homotetramer. The cofactor is Mn(2+). Requires Mg(2+) as cofactor. Co(2+) serves as cofactor. It depends on K(+) as a cofactor.

The protein resides in the cytoplasm. The enzyme catalyses L-methionine + ATP + H2O = S-adenosyl-L-methionine + phosphate + diphosphate. It functions in the pathway amino-acid biosynthesis; S-adenosyl-L-methionine biosynthesis; S-adenosyl-L-methionine from L-methionine: step 1/1. Catalyzes the formation of S-adenosylmethionine from methionine and ATP. The reaction comprises two steps that are both catalyzed by the same enzyme: formation of S-adenosylmethionine (AdoMet) and triphosphate, and subsequent hydrolysis of the triphosphate. The protein is S-adenosylmethionine synthase (SAMS) of Litchi chinensis (Lychee).